Consider the following 204-residue polypeptide: Glycerol-3-phosphate acyltransferase (204 aa).

The next 5 membrane-spanning stretches (helical) occupy residues 8-28 (ILIF…CYIF), 53-73 (VPAA…VVIA), 81-101 (FITA…IFFG), 116-136 (FGFS…VAII), and 155-175 (VIFT…IIIL).

It belongs to the PlsY family. In terms of assembly, probably interacts with PlsX.

It is found in the cell inner membrane. The catalysed reaction is an acyl phosphate + sn-glycerol 3-phosphate = a 1-acyl-sn-glycero-3-phosphate + phosphate. It participates in lipid metabolism; phospholipid metabolism. In terms of biological role, catalyzes the transfer of an acyl group from acyl-phosphate (acyl-PO(4)) to glycerol-3-phosphate (G3P) to form lysophosphatidic acid (LPA). This enzyme utilizes acyl-phosphate as fatty acyl donor, but not acyl-CoA or acyl-ACP. In Francisella tularensis subsp. tularensis (strain FSC 198), this protein is Glycerol-3-phosphate acyltransferase.